A 66-amino-acid polypeptide reads, in one-letter code: Large ribosomal subunit protein bL32 (66 aa).

Positions 1-20 (MAVPKRRKSKSKVRTKRAHH) are disordered.

The protein belongs to the bacterial ribosomal protein bL32 family.

The protein is Large ribosomal subunit protein bL32 of Leptospira borgpetersenii serovar Hardjo-bovis (strain JB197).